A 386-amino-acid chain; its full sequence is MAAVETRVCETDGCSSEAKLQCPTCIKLGIQGSYFCSQECFKGSWATHKLLHKKAKDEKAKREVCSWTVEGDVNTDPWAGYRYTGKLRPHYPLMPTRPVPSYIQRPDYADHPLGMSESEQALKGTSQIKLLSSEDIEGMRLVCRLAREVLDIAAGMIKAGVTTEEIDHAVHLACIARNCYPSPLNYYNFPKSCCTSVNEVICHGIPDRRPLQEGDIVNVDITLYRNGYHGDLNETFFVGDVDEGARKLVQTTYECLMQAIDAVKPGVRYRELGNIIQKHAQANGFSVVRSYCGHGIHKLFHTAPNVPHYAKNKAVGVMKSGHVFTIEPMICEGGWQDETWPDGWTAVTRDGKRSAQFEHTLLVTDTGCEILTRRLDSSRPHFMSQF.

A2 carries the N-acetylalanine modification. A C6H2-type zinc finger spans residues 6-59; sequence TRVCETDGCSSEAKLQCPTCIKLGIQGSYFCSQECFKGSWATHKLLHKKAKDEK. C9, C14, C22, C25, C36, C40, H48, H52, and K53 together coordinate Zn(2+). H203 provides a ligand contact to a protein. Residues D220, D231, and H294 each coordinate Zn(2+). H301 provides a ligand contact to a protein. Residues E327 and E358 each coordinate Zn(2+).

Belongs to the peptidase M24A family. Methionine aminopeptidase type 1 subfamily. Associates with the 60S ribosomal subunit of the 80S translational complex. Zn(2+) serves as cofactor. It depends on Co(2+) as a cofactor. Requires Mn(2+) as cofactor. Fe(2+) is required as a cofactor.

The protein resides in the cytoplasm. The catalysed reaction is Release of N-terminal amino acids, preferentially methionine, from peptides and arylamides.. Its function is as follows. Cotranslationally removes the N-terminal methionine from nascent proteins. The N-terminal methionine is often cleaved when the second residue in the primary sequence is small and uncharged (Met-Ala-, Cys, Gly, Pro, Ser, Thr, or Val). The polypeptide is Methionine aminopeptidase 1 (Metap1) (Mus musculus (Mouse)).